The following is a 475-amino-acid chain: Glutamate--tRNA ligase (475 aa).

The short motif at 8–18 (PSPTGTLHIGT) is the 'HIGH' region element. The 'KMSKS' region motif lies at 247–251 (KLSKR). Lys250 contributes to the ATP binding site.

The protein belongs to the class-I aminoacyl-tRNA synthetase family. Glutamate--tRNA ligase type 1 subfamily. In terms of assembly, monomer.

It localises to the cytoplasm. It catalyses the reaction tRNA(Glu) + L-glutamate + ATP = L-glutamyl-tRNA(Glu) + AMP + diphosphate. Functionally, catalyzes the attachment of glutamate to tRNA(Glu) in a two-step reaction: glutamate is first activated by ATP to form Glu-AMP and then transferred to the acceptor end of tRNA(Glu). The sequence is that of Glutamate--tRNA ligase from Synechococcus sp. (strain RCC307).